We begin with the raw amino-acid sequence, 232 residues long: 2,3,4,5-tetrahydropyridine-2,6-dicarboxylate N-acetyltransferase (232 aa).

The protein belongs to the transferase hexapeptide repeat family. DapH subfamily.

The enzyme catalyses (S)-2,3,4,5-tetrahydrodipicolinate + acetyl-CoA + H2O = L-2-acetamido-6-oxoheptanedioate + CoA. The protein operates within amino-acid biosynthesis; L-lysine biosynthesis via DAP pathway; LL-2,6-diaminopimelate from (S)-tetrahydrodipicolinate (acetylase route): step 1/3. Catalyzes the transfer of an acetyl group from acetyl-CoA to tetrahydrodipicolinate. This Streptococcus gordonii (strain Challis / ATCC 35105 / BCRC 15272 / CH1 / DL1 / V288) protein is 2,3,4,5-tetrahydropyridine-2,6-dicarboxylate N-acetyltransferase.